Reading from the N-terminus, the 203-residue chain is MLRNTIALRSFIRTQSTRPYPVNVEAVYYAPLKLPIKYGDLVADIQLRSYDNENLDFYSDFILRTGYYLGIPLTGPKPLPTRRERWTVIKSPFVHAKSKENFERHTHKRLIRAWDTNPEVLQMLIAYITKHSMAGVGMKCNFFQRSEISLDLGSDANGLEKSLSNIDELYSLRNDDKAQTSAVGQKVLELLDSPDFKKHLEKK.

The transit peptide at methionine 1–threonine 14 directs the protein to the mitochondrion. Serine 193 bears the Phosphoserine mark.

The protein belongs to the universal ribosomal protein uS10 family. As to quaternary structure, component of the mitochondrial small ribosomal subunit (mt-SSU). Mature yeast 74S mitochondrial ribosomes consist of a small (37S) and a large (54S) subunit. The 37S small subunit contains a 15S ribosomal RNA (15S mt-rRNA) and 34 different proteins. The 54S large subunit contains a 21S rRNA (21S mt-rRNA) and 46 different proteins.

It localises to the mitochondrion. In terms of biological role, component of the mitochondrial ribosome (mitoribosome), a dedicated translation machinery responsible for the synthesis of mitochondrial genome-encoded proteins, including at least some of the essential transmembrane subunits of the mitochondrial respiratory chain. The mitoribosomes are attached to the mitochondrial inner membrane and translation products are cotranslationally integrated into the membrane. The sequence is that of Small ribosomal subunit protein uS10m (RSM10) from Saccharomyces cerevisiae (strain ATCC 204508 / S288c) (Baker's yeast).